A 286-amino-acid chain; its full sequence is Pyridoxal kinase PdxY (286 aa).

Residues serine 9 and threonine 44–glutamine 45 each bind substrate. ATP is bound by residues aspartate 111, alanine 143, glutamate 148, lysine 181, and arginine 208–valine 211. Position 223 (aspartate 223) interacts with substrate.

This sequence belongs to the pyridoxine kinase family. PdxY subfamily. As to quaternary structure, homodimer. Mg(2+) serves as cofactor.

It carries out the reaction pyridoxal + ATP = pyridoxal 5'-phosphate + ADP + H(+). It functions in the pathway cofactor metabolism; pyridoxal 5'-phosphate salvage; pyridoxal 5'-phosphate from pyridoxal: step 1/1. In terms of biological role, pyridoxal kinase involved in the salvage pathway of pyridoxal 5'-phosphate (PLP). Catalyzes the phosphorylation of pyridoxal to PLP. The sequence is that of Pyridoxal kinase PdxY from Salmonella choleraesuis (strain SC-B67).